We begin with the raw amino-acid sequence, 149 residues long: Nucleoside diphosphate kinase (149 aa).

Lysine 9, phenylalanine 57, arginine 85, threonine 91, arginine 102, and asparagine 112 together coordinate ATP. Histidine 115 serves as the catalytic Pros-phosphohistidine intermediate.

This sequence belongs to the NDK family. As to quaternary structure, homotetramer. Mg(2+) is required as a cofactor.

The protein localises to the cytoplasm. The catalysed reaction is a 2'-deoxyribonucleoside 5'-diphosphate + ATP = a 2'-deoxyribonucleoside 5'-triphosphate + ADP. It carries out the reaction a ribonucleoside 5'-diphosphate + ATP = a ribonucleoside 5'-triphosphate + ADP. In terms of biological role, major role in the synthesis of nucleoside triphosphates other than ATP. The ATP gamma phosphate is transferred to the NDP beta phosphate via a ping-pong mechanism, using a phosphorylated active-site intermediate. The chain is Nucleoside diphosphate kinase from Roseiflexus sp. (strain RS-1).